A 693-amino-acid polypeptide reads, in one-letter code: Polyribonucleotide nucleotidyltransferase (693 aa).

Positions 489 and 495 each coordinate Mg(2+). Residues Pro-556–Ile-615 enclose the KH domain. One can recognise an S1 motif domain in the interval Gly-625–Arg-693.

The protein belongs to the polyribonucleotide nucleotidyltransferase family. In terms of assembly, component of the RNA degradosome, which is a multiprotein complex involved in RNA processing and mRNA degradation. Mg(2+) is required as a cofactor.

It is found in the cytoplasm. It carries out the reaction RNA(n+1) + phosphate = RNA(n) + a ribonucleoside 5'-diphosphate. Functionally, involved in mRNA degradation. Catalyzes the phosphorolysis of single-stranded polyribonucleotides processively in the 3'- to 5'-direction. The chain is Polyribonucleotide nucleotidyltransferase from Francisella tularensis subsp. mediasiatica (strain FSC147).